A 527-amino-acid chain; its full sequence is Bifunctional pantoate ligase/cytidylate kinase (527 aa).

The tract at residues M1–L277 is pantoate--beta-alanine ligase. An ATP-binding site is contributed by M27–H34. Catalysis depends on H34, which acts as the Proton donor. Q58 provides a ligand contact to (R)-pantoate. Q58 contacts beta-alanine. ATP is bound at residue G147–D150. (R)-pantoate is bound at residue Q153. ATP-binding positions include V176 and L184–R187. Residues T278 to G527 form a cytidylate kinase region. The disordered stretch occupies residues G507 to G527. Residues S511–G527 are compositionally biased toward polar residues.

This sequence in the N-terminal section; belongs to the pantothenate synthetase family. It in the C-terminal section; belongs to the cytidylate kinase family. Type 1 subfamily.

The protein resides in the cytoplasm. The catalysed reaction is (R)-pantoate + beta-alanine + ATP = (R)-pantothenate + AMP + diphosphate + H(+). The enzyme catalyses CMP + ATP = CDP + ADP. It catalyses the reaction dCMP + ATP = dCDP + ADP. The protein operates within cofactor biosynthesis; (R)-pantothenate biosynthesis; (R)-pantothenate from (R)-pantoate and beta-alanine: step 1/1. In terms of biological role, catalyzes the condensation of pantoate with beta-alanine in an ATP-dependent reaction via a pantoyl-adenylate intermediate. Functionally, catalyzes the transfer of a phosphate group from ATP to either CMP or dCMP to form CDP or dCDP and ADP, respectively. In Synechococcus elongatus (strain ATCC 33912 / PCC 7942 / FACHB-805) (Anacystis nidulans R2), this protein is Bifunctional pantoate ligase/cytidylate kinase.